The chain runs to 156 residues: Aspartate carbamoyltransferase regulatory chain (156 aa).

Cys-107, Cys-112, Cys-137, and Cys-140 together coordinate Zn(2+).

It belongs to the PyrI family. In terms of assembly, contains catalytic and regulatory chains. Zn(2+) serves as cofactor.

In terms of biological role, involved in allosteric regulation of aspartate carbamoyltransferase. This Methanopyrus kandleri (strain AV19 / DSM 6324 / JCM 9639 / NBRC 100938) protein is Aspartate carbamoyltransferase regulatory chain.